Consider the following 398-residue polypeptide: Galactose-3-O-sulfotransferase 2 (398 aa).

Over 1-11 (MLSALGGLQRC) the chain is Cytoplasmic. Residues 12–29 (FWAILLLALTVSLLAGFL) traverse the membrane as a helical; Signal-anchor for type II membrane protein segment. Topologically, residues 30–398 (HKDVRLLMPL…PPKNIPFLGA (369 aa)) are lumenal. Residues Asn77, Asn133, Asn180, Asn288, Asn330, and Asn360 are each glycosylated (N-linked (GlcNAc...) asparagine).

The protein belongs to the galactose-3-O-sulfotransferase family.

It localises to the golgi apparatus. The protein resides in the golgi stack membrane. It functions in the pathway protein modification; carbohydrate sulfation. With respect to regulation, strongly inhibited by Cu(2+) and Zn(2+). Transfers a sulfate group to the hydroxyl group at C3 of non-reducing beta-galactosyl residues. Acts both on type 1 (Gal-beta-1,3-GlcNAc) and type 2 (Gal-beta-1,4-GlcNAc) chains with similar efficiency. The chain is Galactose-3-O-sulfotransferase 2 (GAL3ST2) from Sus scrofa (Pig).